The primary structure comprises 325 residues: Syntaxin-16 (325 aa).

Residues Met1–Lys301 are Cytoplasmic-facing. Ser41 is subject to Phosphoserine. A t-SNARE coiled-coil homology domain is found at Thr230–Ala292. The chain crosses the membrane as a helical; Anchor for type IV membrane protein span at residues Met302 to Val322. At Lys323 to Arg325 the chain is on the vesicular side.

This sequence belongs to the syntaxin family. Interacts with GCC2. Interacts with BAIAP3; this interaction is increased in the presence of calcium. As to expression, ubiquitous.

It is found in the golgi apparatus membrane. The protein localises to the cytoplasm. Functionally, SNARE involved in vesicular transport from the late endosomes to the trans-Golgi network. The chain is Syntaxin-16 (STX16) from Homo sapiens (Human).